A 125-amino-acid polypeptide reads, in one-letter code: NADPH-dependent 7-cyano-7-deazaguanine reductase (125 aa).

Cysteine 40 (thioimide intermediate) is an active-site residue. The active-site Proton donor is aspartate 47. Substrate is bound by residues 62-64 (LET) and 81-82 (HE).

It belongs to the GTP cyclohydrolase I family. QueF type 1 subfamily.

It localises to the cytoplasm. The enzyme catalyses 7-aminomethyl-7-carbaguanine + 2 NADP(+) = 7-cyano-7-deazaguanine + 2 NADPH + 3 H(+). The protein operates within tRNA modification; tRNA-queuosine biosynthesis. In terms of biological role, catalyzes the NADPH-dependent reduction of 7-cyano-7-deazaguanine (preQ0) to 7-aminomethyl-7-deazaguanine (preQ1). This chain is NADPH-dependent 7-cyano-7-deazaguanine reductase, found in Frankia casuarinae (strain DSM 45818 / CECT 9043 / HFP020203 / CcI3).